Consider the following 471-residue polypeptide: DnaJ protein P58IPK homolog B (471 aa).

The N-terminal stretch at 1–24 (MARWPWRWRVLLPLLLLHSSPVFA) is a signal peptide. TPR repeat units lie at residues 32 to 65 (PSTL…DPNH), 66 to 99 (SEAY…KPGS), 112 to 146 (AQNA…SPNC), 148 to 180 (KAKL…DEDN), 181 to 214 (LDAL…DPEH), 227 to 260 (LLKK…DPDH), 265 to 298 (VHLY…DGEL), and 300 to 332 (DALT…SPQD). A glycan (N-linked (GlcNAc...) asparagine) is linked at N64. A J domain is found at 353-419 (DWYKILGISK…DKRVRYDRGE (67 aa)).

Interacts with BIP1.

The protein resides in the endoplasmic reticulum lumen. Its function is as follows. May play a role in protein folding in the endoplasmic reticulum. This is DnaJ protein P58IPK homolog B from Oryza sativa subsp. japonica (Rice).